The following is a 107-amino-acid chain: ATP-dependent Clp protease adapter protein ClpS (107 aa).

Belongs to the ClpS family. As to quaternary structure, binds to the N-terminal domain of the chaperone ClpA.

Involved in the modulation of the specificity of the ClpAP-mediated ATP-dependent protein degradation. This is ATP-dependent Clp protease adapter protein ClpS from Acinetobacter baylyi (strain ATCC 33305 / BD413 / ADP1).